The primary structure comprises 943 residues: Isoleucine--tRNA ligase (943 aa).

The 'HIGH' region motif lies at 58-68; that stretch reads PYANGSIHIGH. An L-isoleucyl-5'-AMP-binding site is contributed by E567. A 'KMSKS' region motif is present at residues 608–612; it reads KMSKS. Residue K611 coordinates ATP. Zn(2+)-binding residues include C906, C909, C926, and C929.

The protein belongs to the class-I aminoacyl-tRNA synthetase family. IleS type 1 subfamily. In terms of assembly, monomer. Zn(2+) serves as cofactor.

The protein resides in the cytoplasm. It catalyses the reaction tRNA(Ile) + L-isoleucine + ATP = L-isoleucyl-tRNA(Ile) + AMP + diphosphate. Functionally, catalyzes the attachment of isoleucine to tRNA(Ile). As IleRS can inadvertently accommodate and process structurally similar amino acids such as valine, to avoid such errors it has two additional distinct tRNA(Ile)-dependent editing activities. One activity is designated as 'pretransfer' editing and involves the hydrolysis of activated Val-AMP. The other activity is designated 'posttransfer' editing and involves deacylation of mischarged Val-tRNA(Ile). This Pseudomonas fluorescens (strain ATCC BAA-477 / NRRL B-23932 / Pf-5) protein is Isoleucine--tRNA ligase.